We begin with the raw amino-acid sequence, 514 residues long: Probable E3 ubiquitin-protein ligase ARI10 (514 aa).

The segment covering 1 to 18 (MDYSDDDMIDNESGEENN) has biased composition (acidic residues). Residues 1 to 26 (MDYSDDDMIDNESGEENNSDGGGNES) are disordered. The TRIAD supradomain stretch occupies residues 117–322 (VDIQCGICFE…SDHYACNNYV (206 aa)). Cys121, Cys124, Cys138, His140, Cys143, Cys146, Cys166, Cys171, Cys210, Cys215, Cys231, Cys233, Cys238, Cys241, His246, Cys251, Cys278, and Cys281 together coordinate Zn(2+). Residues 121-171 (CGICFESYTRKEIASVSCGHPYCKTCWTGYITTKIEDGPGCLRVKCPEPSC) form an RING-type 1 zinc finger. The segment at 190–251 (DKYYRYFLRS…SEDAHSPVDC (62 aa)) adopts an IBR-type zinc-finger fold. The segment at 278–308 (CPKCKRPIEKSHGCNHMTCSASCGHRFCWIC) adopts an RING-type 2; atypical zinc-finger fold. The active site involves Cys291. Zn(2+) contacts are provided by Cys296, Cys300, Cys305, Cys308, His315, and Cys318.

The protein belongs to the RBR family. Ariadne subfamily. The cofactor is Zn(2+).

It carries out the reaction [E2 ubiquitin-conjugating enzyme]-S-ubiquitinyl-L-cysteine + [acceptor protein]-L-lysine = [E2 ubiquitin-conjugating enzyme]-L-cysteine + [acceptor protein]-N(6)-ubiquitinyl-L-lysine.. The protein operates within protein modification; protein ubiquitination. Might act as an E3 ubiquitin-protein ligase, or as part of E3 complex, which accepts ubiquitin from specific E2 ubiquitin-conjugating enzymes and then transfers it to substrates. This is Probable E3 ubiquitin-protein ligase ARI10 (ARI10) from Arabidopsis thaliana (Mouse-ear cress).